The sequence spans 218 residues: MGQKINPLGFRLGTTQSHRSFWFAQPKNYSKGLQEDEKIRDCIKNYVQKHMRISSGFEGIARIDIKKRIDLIQVIIHIGFANMLMEGRARGIEELQTNVQKSFHSVNRRLNIAIARVARPYGQPNILAEYIALQLKNRVSFRKAMKKAIELAEQADAKGIQVQIAGRLNGNEIARVEWIREGRVPLQTIRVKIDHCSYPVRTIYGVLGIKIWIFLDEE.

The region spanning 47-118 (VQKHMRISSG…RLNIAIARVA (72 aa)) is the KH type-2 domain.

This sequence belongs to the universal ribosomal protein uS3 family. In terms of assembly, part of the 30S ribosomal subunit.

The protein resides in the plastid. It is found in the chloroplast. The protein is Small ribosomal subunit protein uS3c (rps3) of Nymphaea alba (White water-lily).